The primary structure comprises 631 residues: Phosphomethylpyrimidine synthase (631 aa).

Substrate is bound by residues Asn-239, Met-268, Tyr-297, His-333, 353–355 (SRG), 394–397 (DGLR), and Glu-433. Residue His-437 coordinates Zn(2+). A substrate-binding site is contributed by Tyr-460. His-501 serves as a coordination point for Zn(2+). Residues Cys-581, Cys-584, and Cys-589 each coordinate [4Fe-4S] cluster.

Belongs to the ThiC family. Homodimer. It depends on [4Fe-4S] cluster as a cofactor.

It catalyses the reaction 5-amino-1-(5-phospho-beta-D-ribosyl)imidazole + S-adenosyl-L-methionine = 4-amino-2-methyl-5-(phosphooxymethyl)pyrimidine + CO + 5'-deoxyadenosine + formate + L-methionine + 3 H(+). It functions in the pathway cofactor biosynthesis; thiamine diphosphate biosynthesis. Functionally, catalyzes the synthesis of the hydroxymethylpyrimidine phosphate (HMP-P) moiety of thiamine from aminoimidazole ribotide (AIR) in a radical S-adenosyl-L-methionine (SAM)-dependent reaction. The chain is Phosphomethylpyrimidine synthase from Salmonella dublin (strain CT_02021853).